A 346-amino-acid chain; its full sequence is Probable alcohol dehydrogenase AdhA (346 aa).

The Zn(2+) site is built by Cys-51, His-73, Cys-109, Cys-112, Cys-115, Cys-123, and Cys-165.

The protein belongs to the zinc-containing alcohol dehydrogenase family. Zn(2+) serves as cofactor.

It carries out the reaction a primary alcohol + NAD(+) = an aldehyde + NADH + H(+). The enzyme catalyses a secondary alcohol + NAD(+) = a ketone + NADH + H(+). This chain is Probable alcohol dehydrogenase AdhA (adhA), found in Mycobacterium tuberculosis (strain CDC 1551 / Oshkosh).